Reading from the N-terminus, the 430-residue chain is Divergent protein kinase domain 2A (430 aa).

The first 35 residues, 1 to 35 (MWRLVPPKLGRLSRSLKLAALGSLLVLMVLHSPSL), serve as a signal peptide directing secretion.

This sequence belongs to the DIPK family.

It is found in the cytoplasmic vesicle. The protein resides in the COPI-coated vesicle. Its subcellular location is the golgi apparatus. It localises to the secreted. Functionally, may play a role in cardiomyocyte proliferation through paracrine signaling and activation of the PPI3K-AKT-CDK7 signaling cascade. The polypeptide is Divergent protein kinase domain 2A (Homo sapiens (Human)).